The sequence spans 104 residues: ATP-dependent Clp protease adapter protein ClpS (104 aa).

Belongs to the ClpS family. As to quaternary structure, binds to the N-terminal domain of the chaperone ClpA.

Involved in the modulation of the specificity of the ClpAP-mediated ATP-dependent protein degradation. This Paraburkholderia xenovorans (strain LB400) protein is ATP-dependent Clp protease adapter protein ClpS.